The primary structure comprises 863 residues: Facilitated trehalose transporter Tret1 (863 aa).

The interval 1 to 208 (MSGRDNRGAG…RIGFQQQKAT (208 aa)) is disordered. Over 1-398 (MSGRDNRGAG…VYRPTTNPIY (398 aa)) the chain is Cytoplasmic. Over residues 28 to 46 (KLKEKLTRAGEELGYHRVE) the composition is skewed to basic and acidic residues. Over residues 47–59 (SNLSASNTGTSLD) the composition is skewed to polar residues. Residues 72–85 (AAPQRHPQQQFPHL) show a composition bias toward low complexity. Composition is skewed to polar residues over residues 114–129 (PPQQ…RSSG) and 177–187 (KPQQQGNNKAA). Phosphoserine occurs at positions 254, 255, and 256. A disordered region spans residues 286-307 (VLQGSSTDSDEEGDDAEHKRLI). Residues S326 and S328 each carry the phosphoserine modification. Residues 332-354 (FLTSRQNFQQQRSISTDSRKSRR) form a disordered region. Positions 336 to 347 (RQNFQQQRSIST) are enriched in polar residues. Residues 399 to 419 (IWTQVLAALSVSLGSLVVGFA) form a helical membrane-spanning segment. Residues 420–446 (SAYTSPALVSMTNTNLTSFVVTPQAAS) are Extracellular-facing. N434 is a glycosylation site (N-linked (GlcNAc...) asparagine). Residues 447 to 467 (WVGGIMPLAGLAGGIAGGPFI) form a helical membrane-spanning segment. Residues 468 to 479 (EYLGRRNTILAT) are Cytoplasmic-facing. The helical transmembrane segment at 480-500 (AVPFIISWLLIACAVNVVMVL) threads the bilayer. The Extracellular segment spans residues 501–503 (CGR). A helical transmembrane segment spans residues 504–524 (FLAGFCVGIASLSLPVYLGET). The Cytoplasmic portion of the chain corresponds to 525-530 (VQPEVR). The helical transmembrane segment at 531–551 (GTLGLLPTAFGNIGILLCFVA) threads the bilayer. Residues 552 to 558 (GTYMDWS) lie on the Extracellular side of the membrane. Residues 559–579 (MLAFLGGTLPVPFLILMFLIP) form a helical membrane-spanning segment. Residues 580-642 (ETPRWYVSRG…ELLKRSNLKP (63 aa)) lie on the Cytoplasmic side of the membrane. Residues 643-663 (LSISLGLMFFQQLSGINAVIF) traverse the membrane as a helical segment. Residues 664–679 (YTVQIFQDAGSTIDGN) are Extracellular-facing. Residues 680–700 (VCTIIVGVVNFMATFIATVLI) traverse the membrane as a helical segment. Residues 701–706 (DRAGRK) lie on the Cytoplasmic side of the membrane. Residues 707–727 (ILLYVSNVAMILTLFVLGGFF) form a helical membrane-spanning segment. Topologically, residues 728-746 (YCKSTGMDTSNVGWLPLSC) are extracellular. The chain crosses the membrane as a helical span at residues 747 to 767 (FVVYILGFSLGFGPIPWLMMG). Residues 768-773 (EILPAK) lie on the Cytoplasmic side of the membrane. The helical transmembrane segment at 774–794 (IRGSAASVATAFNWSCTFVVT) threads the bilayer. Residues 795 to 807 (KSFQDMIDVMGAH) are Extracellular-facing. A helical transmembrane segment spans residues 808-828 (GAFWMFGAICFVGLFFVIFYV). The Cytoplasmic portion of the chain corresponds to 829 to 863 (PETQGKTLEDIERKMMGRVRRMSSVANIKPLSFNM). 2 positions are modified to phosphoserine: S851 and S852.

It belongs to the major facilitator superfamily. Sugar transporter (TC 2.A.1.1) family. Trehalose transporter subfamily.

It localises to the cell membrane. Its function is as follows. Low-capacity facilitative transporter for trehalose. Does not transport maltose, sucrose or lactose. Mediates the bidirectional transfer of trehalose. Responsible for the transport of trehalose synthesized in the fat body and the incorporation of trehalose into other tissues that require a carbon source, thereby regulating trehalose levels in the hemolymph. This is Facilitated trehalose transporter Tret1 from Drosophila mojavensis (Fruit fly).